The chain runs to 663 residues: Telomere length regulator taz1 (663 aa).

Positions 15–72 (ENEGDQQFDKEVVQNSDSNIETGQISDSLTKAVEERAETESSSNLSNFTTSESESSKP) are disordered. Composition is skewed to polar residues over residues 27 to 43 (VQNS…SDSL) and 54 to 67 (ESSS…TSES). The residue at position 332 (Ser-332) is a Phosphoserine. Disordered regions lie at residues 389 to 412 (GSTA…TFSE) and 471 to 554 (RAKS…PYEG). 2 stretches are compositionally biased toward basic and acidic residues: residues 489 to 498 (KRGDNLRREA) and 512 to 524 (PPVR…ESRS). Positions 556–612 (RTRRKWTDEEENELYEMISQHGCCWSKIIHIQKLENGPLKTFGPTQIKDKARLIKAR) constitute a Myb-like domain.

As to quaternary structure, interacts with taf1 via the Myb domain, and ccq1.

Its subcellular location is the cytoplasm. The protein resides in the nucleus. It localises to the chromosome. It is found in the telomere. In terms of biological role, regulates telomere length and function. Required for the repression of telomere-adjacent gene expression and for normal meiosis or sporulation. It may be a negative regulator of the telomere-replicating enzyme, telomerase, or may protect against activation of telomerase-independent pathways of telomere elongation. It may be involved in the interactions between chromosomes and spindle proteins, disruption of these interactions would lead to defective meiosis. The chain is Telomere length regulator taz1 (taz1) from Schizosaccharomyces pombe (strain 972 / ATCC 24843) (Fission yeast).